The following is a 636-amino-acid chain: Polyadenylate-binding protein 1 (636 aa).

At Met1 the chain carries N-acetylmethionine. RRM domains lie at 11 to 89, 99 to 175, 191 to 268, and 294 to 370; these read ASLY…WSQR, GNIF…RFKS, TNVY…RAQK, and VNLY…LAQR. Positions 166–289 are UNR-binding; that stretch reads RKVFVGRFKS…FEQMKQDRIT (124 aa). Residue Lys299 is modified to N6-methyllysine. Phosphoserine is present on Ser315. Thr319 is modified (phosphothreonine). An omega-N-methylarginine mark is found at Arg385, Arg419, Arg432, and Arg436. 2 positions are modified to omega-N-methylated arginine; by CARM1: Arg455 and Arg460. Arg475 and Arg481 each carry omega-N-methylarginine. Arg493 carries the asymmetric dimethylarginine; alternate modification. Arg493 carries the post-translational modification Dimethylated arginine; alternate. Omega-N-methylarginine; alternate is present on Arg493. An Omega-N-methylarginine modification is found at Arg506. Lys512 carries the N6-acetyllysine modification. Omega-N-methylarginine is present on Arg518. The 78-residue stretch at 542 to 619 folds into the PABC domain; sequence QEPLTASMLA…AVAVLQAHQA (78 aa).

The protein belongs to the polyadenylate-binding protein type-1 family. As to quaternary structure, may form homodimers. Component of a multisubunit autoregulatory ribonucleoprotein complex (ARC), at least composed of IGF2BP1, PABPC1 and CSDE1. Directly interacts with IGF2BP1. Part of a complex associated with the FOS mCRD domain and consisting of HNRPD, SYNCRIP, PAIP1 and CSDE1/UNR. Interacts with PAIP1 and PAIP2 (via the PABPC1-interacting motifs PAM1 and PAM2). Interacts with PAIP1 with a 1:1 stoichiometry and with PAIP2 with a 1:2 stoichiometry. The interaction with CSDE1 is direct and RNA-independent. Found in a mRNP complex with YBX2. Interacts with TENT2/GLD2. Identified in the spliceosome C complex. Identified in a mRNP complex, at least composed of DHX9, DDX3X, ELAVL1, HNRNPU, IGF2BP1, ILF3, PABPC1, PCBP2, PTBP2, STAU1, STAU2, SYNCRIP and YBX1. The interaction with DDX3X is direct and RNA-independent. This interaction increases in stressed cells and decreases during cell recovery. Identified in a IGF2BP1-dependent mRNP granule complex containing untranslated mRNAs. Interacts with NXF1/TAP. Interacts with PIWIL1. Interacts with AGO1, AGO2, GSPT1 and GSPT2. Interacts with LARP4B. Interacts (via the second and third RRM domains and the C-terminus) with PAIP2B (via central acidic portion and C-terminus). Forms a complex with LARP1 and SHFL. Interacts with LARP4. Interacts with ZFC3H1 in a RNase-sensitive manner. Interacts with TRIM71 (via NHL repeats) in an RNA-dependent manner. Interacts with TENT5C; the interaction has no effect on TENT5C poly(A) polymerase function. Interacts with G3BP1 and G3BP2. Interacts with ENDOV; the interaction is RNA-dependent and stimulates ENDOV activity. Interacts with UPF1; the interaction is RNA-dependent. Interacts with IGF2BP2 and IGF2BP3. May interact with SETX. Interacts with RBM46. Interacts with PAN3 isoform 1/Pan3L and isoform 3/Pan3S (via N-terminus); interaction with isoform 1 is less efficient than with isoform 3. Phosphorylated by MAPKAPK2. In terms of processing, methylated by CARM1. Arg-493 is dimethylated, probably to asymmetric dimethylarginine.

It localises to the cytoplasm. The protein localises to the stress granule. It is found in the nucleus. The protein resides in the cell projection. Its subcellular location is the lamellipodium. Functionally, binds the poly(A) tail of mRNA, including that of its own transcript, and regulates processes of mRNA metabolism such as pre-mRNA splicing and mRNA stability. Its function in translational initiation regulation can either be enhanced by PAIP1 or repressed by PAIP2. Can probably bind to cytoplasmic RNA sequences other than poly(A) in vivo. Binds to N6-methyladenosine (m6A)-containing mRNAs and contributes to MYC stability by binding to m6A-containing MYC mRNAs. Involved in translationally coupled mRNA turnover. Implicated with other RNA-binding proteins in the cytoplasmic deadenylation/translational and decay interplay of the FOS mRNA mediated by the major coding-region determinant of instability (mCRD) domain. Involved in regulation of nonsense-mediated decay (NMD) of mRNAs containing premature stop codons; for the recognition of premature termination codons (PTC) and initiation of NMD a competitive interaction between UPF1 and PABPC1 with the ribosome-bound release factors is proposed. By binding to long poly(A) tails, may protect them from uridylation by ZCCHC6/ZCCHC11 and hence contribute to mRNA stability. The polypeptide is Polyadenylate-binding protein 1 (Pabpc1) (Rattus norvegicus (Rat)).